The chain runs to 413 residues: MSELIVKAKKLKQAASQLAMLSTEEKNNALAMIAEALIAQTGYILQENEKDMEIGKENGLSPSLLDRLQLTEERVQQIADGVRQVVDLPDPIGETIEQWTRPNGLILKQIRVPLGVVGMVYEARPNVTVDAASLCLKTGNAVLLRGSSSAIHSNKALISVMQQALKQSKIPTDAIQLLEDTSRETAQQMFRLKEYIDVLIPRGGAGLIQSVVENATIPVLETGVGNCHIFIDDSAQKEMAIDIVINAKLQRPSVCNAVETVIVHKQWPYIKELLETLHEKGVELRADKQLADTYPFVHEAKEEDWATEFLAPILAVKLVETVDEAIEHIERYGTKHSEAIISECNEHVEQFFARVDAAVLYHNASTRFTDGEQFGYGAEIGISTQKLHARGPMGLRAITTTKTLVYGSGQVRK.

It belongs to the gamma-glutamyl phosphate reductase family.

It localises to the cytoplasm. It catalyses the reaction L-glutamate 5-semialdehyde + phosphate + NADP(+) = L-glutamyl 5-phosphate + NADPH + H(+). It functions in the pathway amino-acid biosynthesis; L-proline biosynthesis; L-glutamate 5-semialdehyde from L-glutamate: step 2/2. Its function is as follows. Catalyzes the NADPH-dependent reduction of L-glutamate 5-phosphate into L-glutamate 5-semialdehyde and phosphate. The product spontaneously undergoes cyclization to form 1-pyrroline-5-carboxylate. The polypeptide is Gamma-glutamyl phosphate reductase (Anoxybacillus flavithermus (strain DSM 21510 / WK1)).